The chain runs to 417 residues: Gamma-glutamyl phosphate reductase (417 aa).

The protein belongs to the gamma-glutamyl phosphate reductase family.

It is found in the cytoplasm. The enzyme catalyses L-glutamate 5-semialdehyde + phosphate + NADP(+) = L-glutamyl 5-phosphate + NADPH + H(+). It participates in amino-acid biosynthesis; L-proline biosynthesis; L-glutamate 5-semialdehyde from L-glutamate: step 2/2. Its function is as follows. Catalyzes the NADPH-dependent reduction of L-glutamate 5-phosphate into L-glutamate 5-semialdehyde and phosphate. The product spontaneously undergoes cyclization to form 1-pyrroline-5-carboxylate. This is Gamma-glutamyl phosphate reductase from Desulfitobacterium hafniense (strain Y51).